The chain runs to 184 residues: Transcription termination/antitermination protein NusG (184 aa).

In terms of domain architecture, KOW spans 133–163 (EGDQVRVVSGPFADFTGTVTEINPERGKVKV).

This sequence belongs to the NusG family.

Functionally, participates in transcription elongation, termination and antitermination. This Thermus thermophilus (strain ATCC 27634 / DSM 579 / HB8) protein is Transcription termination/antitermination protein NusG.